The primary structure comprises 234 residues: Probable chemoreceptor glutamine deamidase CheD (234 aa).

It belongs to the CheD family.

It catalyses the reaction L-glutaminyl-[protein] + H2O = L-glutamyl-[protein] + NH4(+). Functionally, probably deamidates glutamine residues to glutamate on methyl-accepting chemotaxis receptors (MCPs), playing an important role in chemotaxis. The sequence is that of Probable chemoreceptor glutamine deamidase CheD from Burkholderia pseudomallei (strain 1710b).